A 157-amino-acid polypeptide reads, in one-letter code: Regenerating islet-derived protein 4 (157 aa).

The N-terminal stretch at 1-22 (MASKCVRLLLLLSWVAGPEVLS) is a signal peptide. The cysteines at positions 29 and 40 are disulfide-linked. The C-type lectin domain occupies 36–154 (YRSHCYGYFR…CTKRQHFLCK (119 aa)). N-linked (GlcNAc...) asparagine glycans are attached at residues N49, N62, and N101. 2 disulfides stabilise this stretch: C57–C153 and C128–C145. Residues 97 to 101 (DPQKN) and 134 to 136 (KDK) each bind a carbohydrate.

It localises to the secreted. Calcium-independent lectin displaying mannose-binding specificity and able to maintain carbohydrate recognition activity in an acidic environment. May be involved in inflammatory and metaplastic responses of the gastrointestinal epithelium. The sequence is that of Regenerating islet-derived protein 4 (Reg4) from Rattus norvegicus (Rat).